Consider the following 192-residue polypeptide: MITIGILDLQGDVEEHQIITEKALKEMKIDGTTKLVNTLDDIKDCNGLIISGGESSTIGMHLEKTGLSNYLKETGIPILGTCAGLVLLSKKTDQDQPLLGLIDSTVKRNGFGRQRMSFESEIKFNNEDYHGIFIRAPYISQISDDVEVLSKYDDKIIAVKQNQYIGIAFHPELTEDTLIHKLFILEVESCVV.

53-55 (GES) is an L-glutamine binding site. Cys-82 functions as the Nucleophile in the catalytic mechanism. Residues Arg-108 and 134–135 (IR) each bind L-glutamine. Active-site charge relay system residues include His-170 and Glu-172.

This sequence belongs to the glutaminase PdxT/SNO family. In terms of assembly, in the presence of PdxS, forms a dodecamer of heterodimers. Only shows activity in the heterodimer.

It carries out the reaction aldehydo-D-ribose 5-phosphate + D-glyceraldehyde 3-phosphate + L-glutamine = pyridoxal 5'-phosphate + L-glutamate + phosphate + 3 H2O + H(+). It catalyses the reaction L-glutamine + H2O = L-glutamate + NH4(+). It functions in the pathway cofactor biosynthesis; pyridoxal 5'-phosphate biosynthesis. Catalyzes the hydrolysis of glutamine to glutamate and ammonia as part of the biosynthesis of pyridoxal 5'-phosphate. The resulting ammonia molecule is channeled to the active site of PdxS. The sequence is that of Pyridoxal 5'-phosphate synthase subunit PdxT from Methanosphaera stadtmanae (strain ATCC 43021 / DSM 3091 / JCM 11832 / MCB-3).